Here is a 101-residue protein sequence, read N- to C-terminus: uncharacterized protein (101 aa).

The segment covering M1 to K12 has biased composition (basic residues). Disordered stretches follow at residues M1–A30 and A65–K87. Residues A65 to R78 show a composition bias toward low complexity.

This is an uncharacterized protein from Eremothecium gossypii (strain ATCC 10895 / CBS 109.51 / FGSC 9923 / NRRL Y-1056) (Yeast).